The chain runs to 186 residues: High mobility group protein B4 (186 aa).

2 DNA-binding regions (HMG box) span residues 9-79 and 93-161; these read PKAN…MNYV and PRRP…ELYR. A disordered region spans residues 77–98; the sequence is NYVGKRKKRRKRDPQEPRRPPS.

The protein belongs to the HMGB family.

Its subcellular location is the nucleus. It localises to the chromosome. This is High mobility group protein B4 (HMGB4) from Homo sapiens (Human).